The primary structure comprises 683 residues: Probable metal-nicotianamine transporter YSL3 (683 aa).

14 helical membrane-spanning segments follow: residues Leu-29–Gly-49, Ile-58–Ile-78, Met-97–Thr-117, His-142–Ile-162, Val-204–Tyr-224, Ile-265–Leu-285, Val-309–Thr-329, Ile-372–Ile-392, Leu-404–Leu-424, Pro-448–Ser-468, Thr-490–Phe-510, Cys-553–Val-573, Phe-595–Trp-615, and Ser-628–Leu-648.

It belongs to the YSL (TC 2.A.67.2) family.

The protein localises to the membrane. In terms of biological role, may be involved in the transport of nicotianamine-chelated metals. This Oryza sativa subsp. japonica (Rice) protein is Probable metal-nicotianamine transporter YSL3 (YSL3).